A 268-amino-acid polypeptide reads, in one-letter code: Agamous-like MADS-box protein AGL15 (268 aa).

Residues 1–61 enclose the MADS-box domain; sequence MGRGKIEIKR…GKLFEYSSTG (61 aa). The 91-residue stretch at 80–170 folds into the K-box domain; the sequence is AEEDCAEVDI…RRQVQELRSF (91 aa). A disordered region spans residues 205–268; that stretch reads TDSDTTLQLG…PEAKRQRFSV (64 aa). The span at 218 to 232 shows a compositional bias: basic and acidic residues; the sequence is EAHDRRTNEGERESP. Residues 233–244 are compositionally biased toward polar residues; the sequence is SSDSVTTNTSSE.

Homodimer. Interacts with SVP, AGL24, AP1, AGL6, AG, AGL1, AGL11, AGL5, AGL16, SOC1 and AGL21. As to expression, expressed at low levels in flowers and siliques. Also present in seedlings. Detected during embryogenesis and accumulates during early seed development (at protein level). Expressed in shoot apices and the base of leaf petioles.

It localises to the nucleus. It is found in the cytoplasm. Functionally, transcription factor involved in the negative regulation of flowering, probably through the photoperiodic pathway. Acts both as an activator and as a repressor of transcription. Binds DNA in a sequence-specific manner in large CArG motif 5'-CC (A/T)8 GG-3'. Participates probably in the regulation of programs active during the early stages of embryo development. Prevents premature perianth senescence and abscission, fruits development and seed desiccation. Stimulates the expression of at least DTA4, LEC2, FUS3, ABI3, AT4G38680/CSP2 and GRP2B/CSP4. Can enhance somatic embryo development in vitro. In Arabidopsis thaliana (Mouse-ear cress), this protein is Agamous-like MADS-box protein AGL15 (AGL15).